Consider the following 237-residue polypeptide: Probable septum site-determining protein MinC (237 aa).

This sequence belongs to the MinC family. As to quaternary structure, interacts with MinD and FtsZ.

Cell division inhibitor that blocks the formation of polar Z ring septums. Rapidly oscillates between the poles of the cell to destabilize FtsZ filaments that have formed before they mature into polar Z rings. Prevents FtsZ polymerization. In Neisseria gonorrhoeae, this protein is Probable septum site-determining protein MinC.